Consider the following 161-residue polypeptide: Cytochrome c-type biogenesis protein CcmE (161 aa).

The Cytoplasmic portion of the chain corresponds to 1–8 (MNPRRQKR). A helical; Signal-anchor for type II membrane protein membrane pass occupies residues 9 to 29 (LGIILAILIGVSATIGLMIYA). Over 30–161 (LNQNMDLFYT…SEEQKQGSGQ (132 aa)) the chain is Periplasmic. His-129 and Tyr-133 together coordinate heme.

It belongs to the CcmE/CycJ family.

It is found in the cell inner membrane. Functionally, heme chaperone required for the biogenesis of c-type cytochromes. Transiently binds heme delivered by CcmC and transfers the heme to apo-cytochromes in a process facilitated by CcmF and CcmH. This is Cytochrome c-type biogenesis protein CcmE from Vibrio vulnificus (strain CMCP6).